The sequence spans 227 residues: tRNA (guanine-N(7)-)-methyltransferase (227 aa).

Residues 1–21 (MPDMTMKSQPDRLYGRQRGHA) are disordered. S-adenosyl-L-methionine is bound by residues Glu-54, Glu-79, Asp-114, and Asp-136. Residue Asp-136 is part of the active site. Substrate is bound by residues Lys-140, Asp-172, and 206–209 (TRYE).

It belongs to the class I-like SAM-binding methyltransferase superfamily. TrmB family.

The catalysed reaction is guanosine(46) in tRNA + S-adenosyl-L-methionine = N(7)-methylguanosine(46) in tRNA + S-adenosyl-L-homocysteine. It functions in the pathway tRNA modification; N(7)-methylguanine-tRNA biosynthesis. In terms of biological role, catalyzes the formation of N(7)-methylguanine at position 46 (m7G46) in tRNA. This Granulibacter bethesdensis (strain ATCC BAA-1260 / CGDNIH1) protein is tRNA (guanine-N(7)-)-methyltransferase.